The chain runs to 595 residues: NADPH-dependent diflavin oxidoreductase 1 (595 aa).

The Flavodoxin-like domain maps to 6 to 150 (VLVLYGSQTG…VIDPWLLSFW (145 aa)). Residues 12 to 17 (SQTGTA), 59 to 62 (ATTG), 97 to 106 (LGDSSYPKFN), and D132 contribute to the FMN site. Positions 204-444 (LRPFPAPLVF…WVKKGSLKFP (241 aa)) constitute an FAD-binding FR-type domain. Residues R348, 380–383 (RSFS), and 414–417 (GLCS) contribute to the FAD site. Residues T458, 513-514 (SR), and 519-523 (KVYVQ) each bind NADP(+). W594 is a binding site for FAD.

Belongs to the NADPH-dependent diflavin oxidoreductase NDOR1 family. This sequence in the N-terminal section; belongs to the flavodoxin family. It in the C-terminal section; belongs to the flavoprotein pyridine nucleotide cytochrome reductase family. Interacts with ciapin1; as part of the cytosolic iron-sulfur (Fe-S) protein assembly (CIA) machinery. FAD is required as a cofactor. The cofactor is FMN.

It is found in the cytoplasm. The protein localises to the perinuclear region. The enzyme catalyses 2 oxidized [2Fe-2S]-[protein] + NADPH = 2 reduced [2Fe-2S]-[protein] + NADP(+) + H(+). Its function is as follows. NADPH-dependent reductase which is a central component of the cytosolic iron-sulfur (Fe-S) protein assembly (CIA) machinery. Transfers electrons from NADPH via its FAD and FMN prosthetic groups to the [2Fe-2S] cluster of ciapin1, another key component of the CIA machinery. In turn, this reduced cluster provides electrons for assembly of cytosolic iron-sulfur cluster proteins. It can also reduce the [2Fe-2S] cluster of cisd1 and activate this protein implicated in Fe/S cluster repair. In Danio rerio (Zebrafish), this protein is NADPH-dependent diflavin oxidoreductase 1.